A 588-amino-acid polypeptide reads, in one-letter code: Proline--tRNA ligase (588 aa).

It belongs to the class-II aminoacyl-tRNA synthetase family. ProS type 1 subfamily. In terms of assembly, homodimer.

Its subcellular location is the cytoplasm. The enzyme catalyses tRNA(Pro) + L-proline + ATP = L-prolyl-tRNA(Pro) + AMP + diphosphate. In terms of biological role, catalyzes the attachment of proline to tRNA(Pro) in a two-step reaction: proline is first activated by ATP to form Pro-AMP and then transferred to the acceptor end of tRNA(Pro). As ProRS can inadvertently accommodate and process non-cognate amino acids such as alanine and cysteine, to avoid such errors it has two additional distinct editing activities against alanine. One activity is designated as 'pretransfer' editing and involves the tRNA(Pro)-independent hydrolysis of activated Ala-AMP. The other activity is designated 'posttransfer' editing and involves deacylation of mischarged Ala-tRNA(Pro). The misacylated Cys-tRNA(Pro) is not edited by ProRS. The polypeptide is Proline--tRNA ligase (Corynebacterium glutamicum (strain R)).